We begin with the raw amino-acid sequence, 318 residues long: L-lactate dehydrogenase (318 aa).

NAD(+) contacts are provided by residues Val20, Asp41, Lys46, Tyr71, and 85-86; that span reads GA. Residues Gln88, Arg94, and 126 to 129 each bind substrate; that span reads NPVD. NAD(+) contacts are provided by residues 124–126 and Ser149; that span reads ATN. 154–157 is a substrate binding site; that stretch reads DTAR. Beta-D-fructose 1,6-bisphosphate is bound by residues Arg159 and His174. Catalysis depends on His181, which acts as the Proton acceptor. A Phosphotyrosine modification is found at Tyr226. Substrate is bound at residue Thr235.

Belongs to the LDH/MDH superfamily. LDH family. In terms of assembly, homotetramer.

The protein localises to the cytoplasm. It carries out the reaction (S)-lactate + NAD(+) = pyruvate + NADH + H(+). The protein operates within fermentation; pyruvate fermentation to lactate; (S)-lactate from pyruvate: step 1/1. With respect to regulation, allosterically activated by fructose 1,6-bisphosphate (FBP). Catalyzes the conversion of lactate to pyruvate. This chain is L-lactate dehydrogenase, found in Priestia megaterium (Bacillus megaterium).